A 214-amino-acid chain; its full sequence is Adenylate kinase (214 aa).

ATP is bound at residue 10-15 (GAGKGT). The NMP stretch occupies residues 30–59 (STGDMLRAAIKEGTPLGLEAKKVMDAGQLI). Residues Thr-31, Arg-36, 57–59 (QLI), 85–88 (GFPR), and Gln-92 each bind AMP. The segment at 122–159 (GRRVHPGSGRVYHVVYNPPKVADKDNETGEELIIRADD) is LID. Residues Arg-123 and 132–133 (VY) contribute to the ATP site. Residues Arg-156 and Arg-167 each contribute to the AMP site. Position 200 (Gln-200) interacts with ATP.

The protein belongs to the adenylate kinase family. As to quaternary structure, monomer.

It is found in the cytoplasm. The enzyme catalyses AMP + ATP = 2 ADP. The protein operates within purine metabolism; AMP biosynthesis via salvage pathway; AMP from ADP: step 1/1. Catalyzes the reversible transfer of the terminal phosphate group between ATP and AMP. Plays an important role in cellular energy homeostasis and in adenine nucleotide metabolism. This is Adenylate kinase from Pseudoalteromonas translucida (strain TAC 125).